Consider the following 954-residue polypeptide: MSRAPDTHSDFIPRHIGPSDEDQATMLAAIGAASLDALIDEVVPPRIRSRAPLALPAARSETDVLQDLKRMAARNQIYRNYIGQGYYGTHTPNVVLRNVLENPAWYTAYTPYQPEISQGRLEALLNYQTMVADLTGLDISNASLLDEGTAAAEAMTLARRGSRSSSPVFFVSQHCHPQTLEVVRTRAEGLGIELVIGDESRGLPECFGVLLQYPHSLGGVADYRELAQAAHAQGAVVACVTDLLALALIEPPGQWGADIAVGSAQRFGVPFGFGGPHAGFMACRDAYKRNMPGRLVGVSKDAQGNPALRLALQTREQHIRREKATSNICTAQVLLAVMAGLYAVWHGPRGVRRIAERVQSLTGALRAALAGLGVKVANDTWFDTLLLETGVATPAILAAADCARTNLRQVDGARLAVSLDETVTLADLQALVNVFAAGLGKDEVALPAPQASLDGIPAAVRRQGPILSHPVFSSVQSETDMLRYLRKLADKDLALDRTMIPLGSCTMKLNATAEMIPITWPEFALIHPFAPASQTPGYRELIDGLSAQLCEITGYDGISLQPNSGAQGEYAGLLAIRAYHQANGQPQRNVCLIPASAHGTNPASAQLAGMDVVVVASDANGNVDLADLRARIAQVGERLAALMITYPSTHGVFEEAVTEICDAVHEAGGQVYLDGANMNAMVGVAQPGKFGSDVSHLNLHKTFCIPHGGGGPGVGPVAVRAHLAPYLPGVLDAQGRLDPEAKVGPVSAAPYGSAGILPIPYVYIALMGAEGLRRATEVAILNANYIAARLRDHYPVLYAGRNGRVAHECILDVRPLKETSGISAEDIAKRLMDYGFHAPTMSFPVAGTLMVEPTESEGLAELERFIEAMIAIRAEIAQIESGERDRDDNVLRNAPHTAQMLLAEEWHHDYPRQQAAYPVASLRENKYWPPVARVDNAYGDRNLVCACLPVEAYA.

Lys701 is modified (N6-(pyridoxal phosphate)lysine).

This sequence belongs to the GcvP family. As to quaternary structure, the glycine cleavage system is composed of four proteins: P, T, L and H. Pyridoxal 5'-phosphate serves as cofactor.

It catalyses the reaction N(6)-[(R)-lipoyl]-L-lysyl-[glycine-cleavage complex H protein] + glycine + H(+) = N(6)-[(R)-S(8)-aminomethyldihydrolipoyl]-L-lysyl-[glycine-cleavage complex H protein] + CO2. In terms of biological role, the glycine cleavage system catalyzes the degradation of glycine. The P protein binds the alpha-amino group of glycine through its pyridoxal phosphate cofactor; CO(2) is released and the remaining methylamine moiety is then transferred to the lipoamide cofactor of the H protein. This chain is Glycine dehydrogenase (decarboxylating), found in Bordetella parapertussis (strain 12822 / ATCC BAA-587 / NCTC 13253).